Reading from the N-terminus, the 293-residue chain is Ribosomal protein L11 methyltransferase (293 aa).

Thr-145, Gly-166, Asp-188, and Asn-229 together coordinate S-adenosyl-L-methionine.

Belongs to the methyltransferase superfamily. PrmA family.

The protein localises to the cytoplasm. It carries out the reaction L-lysyl-[protein] + 3 S-adenosyl-L-methionine = N(6),N(6),N(6)-trimethyl-L-lysyl-[protein] + 3 S-adenosyl-L-homocysteine + 3 H(+). In terms of biological role, methylates ribosomal protein L11. This chain is Ribosomal protein L11 methyltransferase, found in Idiomarina loihiensis (strain ATCC BAA-735 / DSM 15497 / L2-TR).